The chain runs to 224 residues: Urease accessory protein UreF (224 aa).

The protein belongs to the UreF family. UreD, UreF and UreG form a complex that acts as a GTP-hydrolysis-dependent molecular chaperone, activating the urease apoprotein by helping to assemble the nickel containing metallocenter of UreC. The UreE protein probably delivers the nickel.

The protein resides in the cytoplasm. In terms of biological role, required for maturation of urease via the functional incorporation of the urease nickel metallocenter. This chain is Urease accessory protein UreF, found in Nitrosococcus oceani (strain ATCC 19707 / BCRC 17464 / JCM 30415 / NCIMB 11848 / C-107).